Consider the following 163-residue polypeptide: ATP synthase subunit b 1 (163 aa).

Residues 7–27 (AETWVAIAFVILLGVFAYLGV) traverse the membrane as a helical segment.

This sequence belongs to the ATPase B chain family. In terms of assembly, F-type ATPases have 2 components, F(1) - the catalytic core - and F(0) - the membrane proton channel. F(1) has five subunits: alpha(3), beta(3), gamma(1), delta(1), epsilon(1). F(0) has three main subunits: a(1), b(2) and c(10-14). The alpha and beta chains form an alternating ring which encloses part of the gamma chain. F(1) is attached to F(0) by a central stalk formed by the gamma and epsilon chains, while a peripheral stalk is formed by the delta and b chains.

It is found in the cell inner membrane. In terms of biological role, f(1)F(0) ATP synthase produces ATP from ADP in the presence of a proton or sodium gradient. F-type ATPases consist of two structural domains, F(1) containing the extramembraneous catalytic core and F(0) containing the membrane proton channel, linked together by a central stalk and a peripheral stalk. During catalysis, ATP synthesis in the catalytic domain of F(1) is coupled via a rotary mechanism of the central stalk subunits to proton translocation. Component of the F(0) channel, it forms part of the peripheral stalk, linking F(1) to F(0). This chain is ATP synthase subunit b 1, found in Rhodopseudomonas palustris (strain ATCC BAA-98 / CGA009).